The chain runs to 328 residues: tRNA methyltransferase 10 homolog A (328 aa).

Disordered stretches follow at residues 1–91 (MSSE…RKRV) and 281–328 (HKAC…PVLQ). Position 22 is a phosphoserine (S22). The stretch at 43 to 83 (RQLKKLMKQKQWEEQREQRKEKRKEKRKRKKLERRQLESNS) forms a coiled coil. Residues 52-62 (KQWEEQREQRK) show a composition bias toward basic and acidic residues. Over residues 63 to 75 (EKRKEKRKRKKLE) the composition is skewed to basic residues. The 191-residue stretch at 88–278 (RKRVRRDVAR…TILPQRKGAV (191 aa)) folds into the SAM-dependent MTase TRM10-type domain. Residues 305–319 (ESCRDNPDSPQKDEQ) are compositionally biased toward basic and acidic residues.

The protein belongs to the class IV-like SAM-binding methyltransferase superfamily. TRM10 family. In terms of assembly, interacts with tRNA.

The protein resides in the nucleus. It localises to the nucleolus. It carries out the reaction guanosine(9) in tRNA + S-adenosyl-L-methionine = N(1)-methylguanosine(9) in tRNA + S-adenosyl-L-homocysteine + H(+). Its function is as follows. S-adenosyl-L-methionine-dependent guanine N(1)-methyltransferase that catalyzes the formation of N(1)-methylguanine at position 9 (m1G9) in tRNAs. Probably not able to catalyze formation of N(1)-methyladenine at position 9 (m1A9) in tRNAs. The sequence is that of tRNA methyltransferase 10 homolog A (Trmt10a) from Mus musculus (Mouse).